The sequence spans 410 residues: Chitin deacetylase 3 (410 aa).

The N-terminal stretch at 1 to 18 (MYGHLSLSTLSLLAVVAA) is a signal peptide. The propeptide occupies 19 to 39 (APFHESWLQPRDSDVSQLFRR). N-linked (GlcNAc...) asparagine glycosylation is found at Asn61 and Asn80. The NodB homology domain occupies 124–314 (KVWALSFDDG…KAVANGWSVK (191 aa)). The active-site Proton acceptor is the Asp131. Asp131 contributes to the acetate binding site. Asp132 contributes to the Co(2+) binding site. Asn149 is a glycosylation site (N-linked (GlcNAc...) asparagine). Co(2+) is bound by residues His183 and His187. Tyr225 is an acetate binding site. Residue Asn279 is glycosylated (N-linked (GlcNAc...) asparagine). The Proton donor role is filled by His289. Residue Asn293 is glycosylated (N-linked (GlcNAc...) asparagine). The GPI-anchor amidated serine moiety is linked to residue Ser385. The propeptide at 386 to 410 (SSWPIANRPSLFVIACGLALAAIMV) is removed in mature form.

It belongs to the polysaccharide deacetylase family. Co(2+) is required as a cofactor.

The protein resides in the cell membrane. The catalysed reaction is [(1-&gt;4)-N-acetyl-beta-D-glucosaminyl](n) + n H2O = chitosan + n acetate. In terms of biological role, hydrolyzes the N-acetamido groups of N-acetyl-D-glucosamine residues in chitin to form chitosan and acetate. Chitosan is required to anchor melanin to the cell wall, for maintenance of cell wall integrity, and for proper cytokinesis. Chitosan offers an advantage during infection as it is less readily detected than chitin by host immunosurveillance mechanisms. In Cryptococcus neoformans var. neoformans serotype D (strain B-3501A) (Filobasidiella neoformans), this protein is Chitin deacetylase 3.